We begin with the raw amino-acid sequence, 208 residues long: MSTVLFVKSSDRTAEEGVSTKLYEAFLAAYKENNPNDEVVELDLHKENLPYLGRDMINGTFKAGQGMEMTEDEKKQAAIADKYLNQFVKADKVVFAFPLWNFTVPAVLHTYVDYLSRAGVTFKYTQEGPVGLMGGKKVALLNARGGVYSEGPMAALEMSLNFMKTVLGFWGVQDLHTVVIEGHNAAPDQAQEIVEKGLQEAKDLAAKF.

Ser10 serves as a coordination point for FMN.

It belongs to the azoreductase type 1 family. As to quaternary structure, homodimer. FMN serves as cofactor.

It catalyses the reaction 2 a quinone + NADH + H(+) = 2 a 1,4-benzosemiquinone + NAD(+). The catalysed reaction is N,N-dimethyl-1,4-phenylenediamine + anthranilate + 2 NAD(+) = 2-(4-dimethylaminophenyl)diazenylbenzoate + 2 NADH + 2 H(+). Quinone reductase that provides resistance to thiol-specific stress caused by electrophilic quinones. Contributes to resistance to 2-methylhydroquinone (2-MHQ) and catechol. Its function is as follows. Also exhibits azoreductase activity. Catalyzes the reductive cleavage of the azo bond in aromatic azo compounds to the corresponding amines. In Bacillus subtilis (strain 168), this protein is FMN-dependent NADH:quinone oxidoreductase 1.